Here is a 499-residue protein sequence, read N- to C-terminus: Spore germination protein GerQA (499 aa).

A run of 3 helical transmembrane segments spans residues 285 to 305 (LFAF…LTYH), 376 to 396 (SNVL…APIY), and 409 to 429 (FIIS…SLLL).

This sequence belongs to the GerABKA family.

The protein localises to the membrane. In terms of biological role, required for the germination response to inosine. Has no role in L-alanine germination. The chain is Spore germination protein GerQA (gerQA) from Bacillus cereus.